We begin with the raw amino-acid sequence, 104 residues long: ATP-dependent Clp protease adapter protein ClpS (104 aa).

This sequence belongs to the ClpS family. In terms of assembly, binds to the N-terminal domain of the chaperone ClpA.

Its function is as follows. Involved in the modulation of the specificity of the ClpAP-mediated ATP-dependent protein degradation. The chain is ATP-dependent Clp protease adapter protein ClpS from Neisseria gonorrhoeae (strain ATCC 700825 / FA 1090).